The sequence spans 214 residues: Chaperone protein TorD (214 aa).

Belongs to the TorD/DmsD family. TorD subfamily.

Its subcellular location is the cytoplasm. Functionally, involved in the biogenesis of TorA. Acts on TorA before the insertion of the molybdenum cofactor and, as a result, probably favors a conformation of the apoenzyme that is competent for acquiring the cofactor. This is Chaperone protein TorD from Aeromonas salmonicida (strain A449).